The primary structure comprises 244 residues: 5'-deoxynucleotidase (244 aa).

The catalysed reaction is a 2'-deoxyribonucleoside 5'-phosphate + H2O = a 2'-deoxyribonucleoside + phosphate. In terms of biological role, following host DNA degradation, is responsible for the degradation of 5'-dNMP's to deoxynucleosides that can be further excreted. Active on deoxynucleoside 5'-monophosphates but not active as a phosphatase on ribonucleotides, deoxynucleoside 5'-triphosphates, deoxynucleoside 3'-monophosphates, or deoxyoligonucleotides. This Escherichia coli (Enterobacteria phage T5) protein is 5'-deoxynucleotidase (dmp).